A 315-amino-acid chain; its full sequence is Putative carboxypeptidase RC0549 (315 aa).

The active-site Nucleophile is the S125. Residues E225 and H288 each act as charge relay system in the active site.

Belongs to the peptidase S66 family.

This is Putative carboxypeptidase RC0549 from Rickettsia conorii (strain ATCC VR-613 / Malish 7).